A 51-amino-acid polypeptide reads, in one-letter code: Large ribosomal subunit protein eL39 (51 aa).

Positions 1–22 are disordered; it reads MAAQKSFRIKQKMAKAKKQNRP. Residues 7 to 20 are compositionally biased toward basic residues; the sequence is FRIKQKMAKAKKQN.

It belongs to the eukaryotic ribosomal protein eL39 family. In terms of assembly, component of the large ribosomal subunit (LSU). Mature yeast ribosomes consist of a small (40S) and a large (60S) subunit. The 40S small subunit contains 1 molecule of ribosomal RNA (18S rRNA) and 33 different proteins (encoded by 57 genes). The large 60S subunit contains 3 rRNA molecules (25S, 5.8S and 5S rRNA) and 46 different proteins (encoded by 81 genes). eL39 interacts with YIH1.

Its subcellular location is the cytoplasm. Functionally, component of the ribosome, a large ribonucleoprotein complex responsible for the synthesis of proteins in the cell. The small ribosomal subunit (SSU) binds messenger RNAs (mRNAs) and translates the encoded message by selecting cognate aminoacyl-transfer RNA (tRNA) molecules. The large subunit (LSU) contains the ribosomal catalytic site termed the peptidyl transferase center (PTC), which catalyzes the formation of peptide bonds, thereby polymerizing the amino acids delivered by tRNAs into a polypeptide chain. The nascent polypeptides leave the ribosome through a tunnel in the LSU and interact with protein factors that function in enzymatic processing, targeting, and the membrane insertion of nascent chains at the exit of the ribosomal tunnel. This Saccharomyces cerevisiae (strain ATCC 204508 / S288c) (Baker's yeast) protein is Large ribosomal subunit protein eL39.